We begin with the raw amino-acid sequence, 1495 residues long: Nuclear pore complex protein NUP160 (1495 aa).

Part of the nuclear pore complex (NPC). The NPC has an eight-fold symmetrical structure comprising a central transport channel and two rings, the cytoplasmic and nuclear rings, to which eight filaments are attached. The cytoplasmic filaments have loose ends, while the nuclear filaments are joined in a distal ring, forming a nuclear basket. NPCs are highly dynamic in configuration and composition, and can be devided in 3 subcomplexes, the NUP62 subcomplex, the NUP107-160 subcomplex and the NUP93 subcomplex, containing approximately 30 different nucleoporin proteins. Expressed in roots, stems, anthers, siliques and vascular tissues of cotyledons, leaves and hypocotyls.

It localises to the nucleus membrane. The protein resides in the nucleus. It is found in the nuclear pore complex. In terms of biological role, contributes to the transfer of mature mRNA from the nucleus to the cytosol. Required for both R gene-mediated and basal disease resistance. RNA export seems to play a critical role in stress responses and regulation of plant growth and development. Required for proper expression of factors associated with auxin signaling. The chain is Nuclear pore complex protein NUP160 from Arabidopsis thaliana (Mouse-ear cress).